The following is a 310-amino-acid chain: Probable cell division protein WhiA (310 aa).

The H-T-H motif DNA-binding region spans 277-310; that stretch reads SLKELAEQVPDGPISKSGVNHRLKKLHEIAENLR.

This sequence belongs to the WhiA family.

Functionally, involved in cell division and chromosome segregation. This Lactobacillus delbrueckii subsp. bulgaricus (strain ATCC BAA-365 / Lb-18) protein is Probable cell division protein WhiA.